The primary structure comprises 313 residues: Olfactory receptor 5H15 (313 aa).

Residues 1-28 (MEEENATLLTEFVLTGFLYQPQWKIPLF) are Extracellular-facing. An N-linked (GlcNAc...) asparagine glycan is attached at Asn-5. The helical transmembrane segment at 29-49 (LAFLVIYLITIMGNLGLIAVI) threads the bilayer. Over 50-56 (WKDPHLH) the chain is Cytoplasmic. A helical membrane pass occupies residues 57–77 (IPMYLLLGNLAFVDAWISSTV). At 78–98 (TPKMLNNFLAKSKMISLSECK) the chain is on the extracellular side. Cys-97 and Cys-179 are disulfide-bonded. The helical transmembrane segment at 99-119 (IQFFSIAIGVTTECFLLATMA) threads the bilayer. Residues 120–143 (YDRYVAICKPLLYPAIMTNGLCIR) are Cytoplasmic-facing. The helical transmembrane segment at 144–164 (LLILSYIAGILHALIHEGFLF) threads the bilayer. Residues 165 to 195 (RLTFCNSNIVHHIYCDTIPLSKISCTDSSIN) are Extracellular-facing. The chain crosses the membrane as a helical span at residues 196–216 (FLMVFIFSGSIQVFSIVTILI). At 217-240 (SYTFVLFTVLEKKSDKGVRKAFST) the chain is on the cytoplasmic side. The chain crosses the membrane as a helical span at residues 241-261 (CGAHLFSVCLYYGPLLLMYVG). The Extracellular segment spans residues 262–271 (PASPQADGQN). Residues 272-292 (MVEPLFYTVIIPLLNPIIYSL) traverse the membrane as a helical segment. Topologically, residues 293–313 (RNKQVIVSFIKMLKRNVKVSY) are cytoplasmic.

The protein belongs to the G-protein coupled receptor 1 family.

It localises to the cell membrane. Its function is as follows. Odorant receptor. The protein is Olfactory receptor 5H15 (OR5H15) of Homo sapiens (Human).